A 348-amino-acid chain; its full sequence is 5-deoxyribose 1-phosphate isomerase (348 aa).

Substrate contacts are provided by residues 49-51 (RGA), R92, and Q199. D240 serves as the catalytic Proton donor. 250-251 (NK) serves as a coordination point for substrate.

It belongs to the EIF-2B alpha/beta/delta subunits family. DrdI subfamily. As to quaternary structure, homodimer.

The catalysed reaction is 5-deoxy-alpha-D-ribose 1-phosphate = 5-deoxy-D-ribulose 1-phosphate. It carries out the reaction 5-(methylsulfanyl)-alpha-D-ribose 1-phosphate = 5-(methylsulfanyl)-D-ribulose 1-phosphate. Its pathway is carbohydrate degradation. Functionally, catalyzes the isomerization of 5-deoxy-alpha-D-ribose 1-phosphate to 5-deoxy-D-ribulose 1-phosphate, as part of a 5-deoxyribose salvage pathway that recycles this toxic radical SAM enzyme by-product to mainstream metabolites. Also seems to be able to catalyze the conversion of methylthioribose-1-phosphate (MTR-1-P) into methylthioribulose-1-phosphate (MTRu-1-P). However this enzyme may not function in methionine salvage in B.thuringiensis since it exists a paralog (MtnA) present in the methionine salvage pathway cluster. The protein is 5-deoxyribose 1-phosphate isomerase of Bacillus thuringiensis serovar kurstaki (strain ATCC 35866 / NRRL B-4488 / HD73).